Reading from the N-terminus, the 357-residue chain is uncharacterized protein (357 aa).

This is an uncharacterized protein from Mycoplasma pneumoniae (strain ATCC 29342 / M129 / Subtype 1) (Mycoplasmoides pneumoniae).